Consider the following 718-residue polypeptide: Glycine--tRNA ligase beta subunit (718 aa).

It belongs to the class-II aminoacyl-tRNA synthetase family. Tetramer of two alpha and two beta subunits.

The protein localises to the cytoplasm. It carries out the reaction tRNA(Gly) + glycine + ATP = glycyl-tRNA(Gly) + AMP + diphosphate. The protein is Glycine--tRNA ligase beta subunit of Mesorhizobium japonicum (strain LMG 29417 / CECT 9101 / MAFF 303099) (Mesorhizobium loti (strain MAFF 303099)).